The following is a 100-amino-acid chain: Large ribosomal subunit protein uL23 (100 aa).

Belongs to the universal ribosomal protein uL23 family. As to quaternary structure, part of the 50S ribosomal subunit. Contacts protein L29, and trigger factor when it is bound to the ribosome.

One of the early assembly proteins it binds 23S rRNA. One of the proteins that surrounds the polypeptide exit tunnel on the outside of the ribosome. Forms the main docking site for trigger factor binding to the ribosome. This Mycolicibacterium gilvum (strain PYR-GCK) (Mycobacterium gilvum (strain PYR-GCK)) protein is Large ribosomal subunit protein uL23.